We begin with the raw amino-acid sequence, 239 residues long: Prolyl hydroxylase EGLN3 (239 aa).

A beta(2)beta(3) 'finger-like' loop region spans residues 62–73; the sequence is AGPRAGVSKRHL. The tract at residues 88–104 is required for interaction with ADRB2; the sequence is CEAINFLLSLIDRLVLY. The Fe2OG dioxygenase domain maps to 116-214; the sequence is ERSKAMVACY…RYAMTVWYFD (99 aa). His-135, Asp-137, and His-196 together coordinate Fe cation. Residue Arg-205 coordinates 2-oxoglutarate.

Interacts with ADRB2; the interaction hydroxylates ADRB2 facilitating its ubiquitination by the VHL-E3 ligase complex. Interacts with PKM; the interaction hydroxylates PKM in hypoxia. Interacts with WDR83; the interaction leads to almost complete elimination of HIF-mediated reporter activity. Interacts with BCL2 (via its BH4 domain); the interaction disrupts the BAX-BCL4 complex inhibiting the anti-apoptotic activity of BCL2. Interacts with LIMD1, WTIP and AJUBA. The cofactor is Fe(2+). L-ascorbate is required as a cofactor. In terms of processing, ubiquitinated by SIAH1 and/or SIAH2 in response to the unfolded protein response (UPR), leading to its degradation. As to expression, highly expressed in cardiac and smooth muscle. Also high expression in brain, skeletal muscle and kidney. Low levels in lung.

It localises to the nucleus. It is found in the cytoplasm. The catalysed reaction is L-prolyl-[protein] + 2-oxoglutarate + O2 = trans-4-hydroxy-L-prolyl-[protein] + succinate + CO2. It catalyses the reaction L-prolyl-[hypoxia-inducible factor alpha subunit] + 2-oxoglutarate + O2 = trans-4-hydroxy-L-prolyl-[hypoxia-inducible factor alpha subunit] + succinate + CO2. Prolyl hydroxylase that mediates hydroxylation of proline residues in target proteins, such as PKM, TELO2, ATF4 and HIF1A. Target proteins are preferentially recognized via a LXXLAP motif. Cellular oxygen sensor that catalyzes, under normoxic conditions, the post-translational formation of 4-hydroxyproline in hypoxia-inducible factor (HIF) alpha proteins. Hydroxylates a specific proline found in each of the oxygen-dependent degradation (ODD) domains (N-terminal, NODD, and C-terminal, CODD) of HIF1A. Also hydroxylates HIF2A. Has a preference for the CODD site for both HIF1A and HIF2A. Hydroxylation on the NODD site by EGLN3 appears to require prior hydroxylation on the CODD site. Hydroxylated HIFs are then targeted for proteasomal degradation via the von Hippel-Lindau ubiquitination complex. Under hypoxic conditions, the hydroxylation reaction is attenuated allowing HIFs to escape degradation resulting in their translocation to the nucleus, heterodimerization with HIF1B, and increased expression of hypoxy-inducible genes. ELGN3 is the most important isozyme in limiting physiological activation of HIFs (particularly HIF2A) in hypoxia. Also hydroxylates PKM in hypoxia, limiting glycolysis. Under normoxia, hydroxylates and regulates the stability of ADRB2. Regulator of cardiomyocyte and neuronal apoptosis. In cardiomyocytes, inhibits the anti-apoptotic effect of BCL2 by disrupting the BAX-BCL2 complex. In neurons, has a NGF-induced proapoptotic effect, probably through regulating CASP3 activity. Also essential for hypoxic regulation of neutrophilic inflammation. Plays a crucial role in DNA damage response (DDR) by hydroxylating TELO2, promoting its interaction with ATR which is required for activation of the ATR/CHK1/p53 pathway. Also mediates hydroxylation of ATF4, leading to decreased protein stability of ATF4. This Mus musculus (Mouse) protein is Prolyl hydroxylase EGLN3.